The primary structure comprises 335 residues: Capsular polysaccharide phosphotransferase WcwK (335 aa).

Belongs to the stealth family.

The protein is Capsular polysaccharide phosphotransferase WcwK (wcwK) of Streptococcus pneumoniae.